Here is a 1377-residue protein sequence, read N- to C-terminus: DNA-directed RNA polymerase subunit beta' (1377 aa).

Zn(2+) contacts are provided by cysteine 60, cysteine 62, cysteine 75, and cysteine 78. Mg(2+)-binding residues include aspartate 449, aspartate 451, and aspartate 453. The Zn(2+) site is built by cysteine 777, cysteine 851, cysteine 858, and cysteine 861.

This sequence belongs to the RNA polymerase beta' chain family. The RNAP catalytic core consists of 2 alpha, 1 beta, 1 beta' and 1 omega subunit. When a sigma factor is associated with the core the holoenzyme is formed, which can initiate transcription. Requires Mg(2+) as cofactor. Zn(2+) is required as a cofactor.

It catalyses the reaction RNA(n) + a ribonucleoside 5'-triphosphate = RNA(n+1) + diphosphate. DNA-dependent RNA polymerase catalyzes the transcription of DNA into RNA using the four ribonucleoside triphosphates as substrates. The polypeptide is DNA-directed RNA polymerase subunit beta' (Borreliella afzelii (strain PKo) (Borrelia afzelii)).